A 634-amino-acid chain; its full sequence is RNA polymerase sigma factor RpoD (634 aa).

Residues 177–202 (LHDETPENDEENSSETEGEEHEDNHL) are disordered. Acidic residues predominate over residues 182 to 197 (PENDEENSSETEGEEH). A sigma-70 factor domain-2 region spans residues 385–455 (MIEANLRLVI…TRAIADQART (71 aa)). The short motif at 409-412 (DLIQ) is the Interaction with polymerase core subunit RpoC element. The segment at 464 to 541 (ETINKILRTS…DKNAVAPIDA (78 aa)) is sigma-70 factor domain-3. Residues 554–607 (VLATLTPREERVLRMRFGIGMNTDHTLEEVGQQFKVTRERIRQIESKALRKLQH) form a sigma-70 factor domain-4 region. A DNA-binding region (H-T-H motif) is located at residues 580–599 (LEEVGQQFKVTRERIRQIES). Residues 608–634 (PIRSKKLNSFRSGGKRGDGNSSDLLEA) form a disordered region.

It belongs to the sigma-70 factor family. RpoD/SigA subfamily. Interacts transiently with the RNA polymerase catalytic core.

The protein localises to the cytoplasm. Functionally, sigma factors are initiation factors that promote the attachment of RNA polymerase to specific initiation sites and are then released. This sigma factor is the primary sigma factor during exponential growth. This Rickettsia conorii (strain ATCC VR-613 / Malish 7) protein is RNA polymerase sigma factor RpoD.